A 67-amino-acid chain; its full sequence is Probable tautomerase K2 (67 aa).

Catalysis depends on proline 2, which acts as the Proton acceptor; via imino nitrogen.

Belongs to the 4-oxalocrotonate tautomerase family.

The protein is Probable tautomerase K2 of Dickeya dadantii (strain 3937) (Erwinia chrysanthemi (strain 3937)).